The sequence spans 200 residues: Casparian strip membrane protein 1 (200 aa).

Residues 1 to 38 (MKSGDHAAIDVPESSAVAKGKAPLIATPREQKSGFKKG) are Cytoplasmic-facing. The chain crosses the membrane as a helical span at residues 39 to 59 (LGIFDFLLRLGAIIAALAAAA). The Extracellular portion of the chain corresponds to 60 to 86 (TMGTSDETLPFFTQFFQFEASYDDLPT). A helical transmembrane segment spans residues 87-107 (FMFFVIAMALIGGYLVLSLPF). Topologically, residues 108 to 121 (SIVTIVRPHAVAPR) are cytoplasmic. The chain crosses the membrane as a helical span at residues 122–142 (LLLFILDIVALTLTTAAGAAA). The Extracellular segment spans residues 143–171 (AAIVYLAHNGNPNTNWLAICQQFGDFCQE). Residues 172–192 (VSGAVVASFVTVVVLMSLVLL) traverse the membrane as a helical segment. Residues 193 to 200 (SGVALKKH) are Cytoplasmic-facing.

This sequence belongs to the Casparian strip membrane proteins (CASP) family. In terms of assembly, homodimer and heterodimers.

It localises to the cell membrane. Functionally, regulates membrane-cell wall junctions and localized cell wall deposition. Required for establishment of the Casparian strip membrane domain (CSD) and the subsequent formation of Casparian strips, a cell wall modification of the root endodermis that determines an apoplastic barrier between the intraorganismal apoplasm and the extraorganismal apoplasm and prevents lateral diffusion. The chain is Casparian strip membrane protein 1 from Theobroma cacao (Cacao).